A 98-amino-acid chain; its full sequence is Large ribosomal subunit protein bL28 (98 aa).

This sequence belongs to the bacterial ribosomal protein bL28 family.

In Phenylobacterium zucineum (strain HLK1), this protein is Large ribosomal subunit protein bL28.